The sequence spans 180 residues: DNA-directed RNA polymerase subunit Rpo7 (180 aa).

The S1 motif domain maps to 82-165 (QEVVEGEVLQ…RLPRIALTMR (84 aa)).

Belongs to the eukaryotic RPB7/RPC8 RNA polymerase subunit family. Part of the 13-subunit RNA polymerase complex. Forms a stalk with Rpo4 that extends from the main structure.

It localises to the cytoplasm. The catalysed reaction is RNA(n) + a ribonucleoside 5'-triphosphate = RNA(n+1) + diphosphate. In terms of biological role, DNA-dependent RNA polymerase (RNAP) catalyzes the transcription of DNA into RNA using the four ribonucleoside triphosphates as substrates. The highly mobile Rpo4/Rpo7 heterodimer is conditionally required for transcription initiation. This is DNA-directed RNA polymerase subunit Rpo7 from Saccharolobus shibatae (strain ATCC 51178 / DSM 5389 / JCM 8931 / NBRC 15437 / B12) (Sulfolobus shibatae).